We begin with the raw amino-acid sequence, 550 residues long: Eukaryotic translation initiation factor 3 subunit D (550 aa).

The interval Asp288–Pro302 is RNA gate. The segment at Pro526 to Ser550 is disordered. Residues Ser532 to Ser550 are compositionally biased toward acidic residues.

This sequence belongs to the eIF-3 subunit D family. In terms of assembly, component of the eukaryotic translation initiation factor 3 (eIF-3) complex, which is composed of 13 subunits: eif3a, eif3b, eif3c, eif3d, eif3e, eif3f, eif3g, eif3h, eif3i, eif3j, eif3k, eif3l and eif3m.

The protein localises to the cytoplasm. MRNA cap-binding component of the eukaryotic translation initiation factor 3 (eIF-3) complex, which is involved in protein synthesis of a specialized repertoire of mRNAs and, together with other initiation factors, stimulates binding of mRNA and methionyl-tRNAi to the 40S ribosome. The eIF-3 complex specifically targets and initiates translation of a subset of mRNAs involved in cell proliferation. In the eIF-3 complex, eif3d specifically recognizes and binds the 7-methylguanosine cap of a subset of mRNAs. This is Eukaryotic translation initiation factor 3 subunit D (eif3d) from Xenopus laevis (African clawed frog).